The following is a 360-amino-acid chain: Photosystem II protein D1 (360 aa).

Transmembrane regions (helical) follow at residues 30–47, 119–134, and 143–157; these read YVGW…TAAA, HFLI…QWEL, and WICV…AAFA. His119 serves as a coordination point for chlorophyll a. Tyr127 provides a ligand contact to pheophytin a. 2 residues coordinate [CaMn4O5] cluster: Asp171 and Glu190. A helical transmembrane segment spans residues 198-219; that stretch reads FHMAGVAGMFGGSLFSAMHGSL. Position 199 (His199) interacts with chlorophyll a. Residues His216 and 265-266 each bind a quinone; that span reads SF. His216 contributes to the Fe cation binding site. His273 contributes to the Fe cation binding site. Residues 275–289 traverse the membrane as a helical segment; the sequence is FLAVFPVVCVWLTSM. 4 residues coordinate [CaMn4O5] cluster: His333, Glu334, Asp343, and Ala345. Positions 346-360 are excised as a propeptide; the sequence is AAESTTVALSAPAIG.

The protein belongs to the reaction center PufL/M/PsbA/D family. As to quaternary structure, PSII is composed of 1 copy each of membrane proteins PsbA, PsbB, PsbC, PsbD, PsbE, PsbF, PsbH, PsbI, PsbJ, PsbK, PsbL, PsbM, PsbT, PsbX, PsbY, Psb30/Ycf12, peripheral proteins PsbO, CyanoQ (PsbQ), PsbU, PsbV and a large number of cofactors. It forms dimeric complexes. The cofactor is The D1/D2 heterodimer binds P680, chlorophylls that are the primary electron donor of PSII, and subsequent electron acceptors. It shares a non-heme iron and each subunit binds pheophytin, quinone, additional chlorophylls, carotenoids and lipids. D1 provides most of the ligands for the Mn4-Ca-O5 cluster of the oxygen-evolving complex (OEC). There is also a Cl(-1) ion associated with D1 and D2, which is required for oxygen evolution. The PSII complex binds additional chlorophylls, carotenoids and specific lipids.. In terms of processing, tyr-162 forms a radical intermediate that is referred to as redox-active TyrZ, YZ or Y-Z. C-terminally processed by CtpA; processing is essential to allow assembly of the oxygen-evolving complex and thus photosynthetic growth.

The protein resides in the cellular thylakoid membrane. The catalysed reaction is 2 a plastoquinone + 4 hnu + 2 H2O = 2 a plastoquinol + O2. In terms of biological role, photosystem II (PSII) is a light-driven water:plastoquinone oxidoreductase that uses light energy to abstract electrons from H(2)O, generating O(2) and a proton gradient subsequently used for ATP formation. It consists of a core antenna complex that captures photons, and an electron transfer chain that converts photonic excitation into a charge separation. The D1/D2 (PsbA/PsbD) reaction center heterodimer binds P680, the primary electron donor of PSII as well as several subsequent electron acceptors. This Prochlorococcus marinus (strain MIT 9301) protein is Photosystem II protein D1.